The primary structure comprises 130 residues: Protein ApaG (130 aa).

The region spanning 3–127 is the ApaG domain; it reads RALTRDIEVV…FSLDSPGLLR (125 aa). Positions 63-83 are disordered; the sequence is EVTGPGVVGEQPRLSPGDTYE.

The sequence is that of Protein ApaG from Rhizobium etli (strain ATCC 51251 / DSM 11541 / JCM 21823 / NBRC 15573 / CFN 42).